The chain runs to 485 residues: Ribulose bisphosphate carboxylase large chain (485 aa).

The substrate site is built by N124 and T174. K176 (proton acceptor) is an active-site residue. K178 contacts substrate. Mg(2+) contacts are provided by K202, D204, and E205. At K202 the chain carries N6-carboxylysine. The Proton acceptor role is filled by H294. The substrate site is built by R295, H327, and S379.

Belongs to the RuBisCO large chain family. Type I subfamily. As to quaternary structure, heterohexadecamer of 8 large chains and 8 small chains. The cofactor is Mg(2+).

The catalysed reaction is 2 (2R)-3-phosphoglycerate + 2 H(+) = D-ribulose 1,5-bisphosphate + CO2 + H2O. It carries out the reaction D-ribulose 1,5-bisphosphate + O2 = 2-phosphoglycolate + (2R)-3-phosphoglycerate + 2 H(+). In terms of biological role, ruBisCO catalyzes two reactions: the carboxylation of D-ribulose 1,5-bisphosphate, the primary event in carbon dioxide fixation, as well as the oxidative fragmentation of the pentose substrate. Both reactions occur simultaneously and in competition at the same active site. This Rhodopseudomonas palustris (strain HaA2) protein is Ribulose bisphosphate carboxylase large chain.